The following is a 1087-amino-acid chain: A-kinase anchor protein 9 (1087 aa).

A coiled-coil region spans residues 5–461; it reads EVQCQAEKVR…REREKMERIQ (457 aa). Residues 559–572 are PKA-RII subunit binding domain; that stretch reads SLQKVLEEKVAAAL. Positions 614 to 773 form a coiled coil; it reads MESDVSALTW…SEKEDKTEVQ (160 aa). The segment covering 667 to 685 has biased composition (basic and acidic residues); the sequence is VQDSETKQRERERQSRLHG. Residues 667-691 are disordered; sequence VQDSETKQRERERQSRLHGDLGVLE.

As to quaternary structure, interacts with the regulatory region of protein kinase N (PKN), protein phosphatase 2A (PP2A), protein phosphatase 1 (PP1) and the immature non-phosphorylated form of PKC epsilon. Interacts with CIP4 and FNBP1. Interacts with chloride intracellular channel proteins CLIC1, CLIC4 and CLIC5. CSNK1D binding promotes its centrosomal subcellular location. Interacts with GM130/GOLGA2; leading to recruitment to the Golgi apparatus. Interacts with KCNQ1; targets protein kinase A (PKA) catalytic and regulatory subunits and protein phosphatase 1 (PP1), to the heterodimer KCNQ1-KCNE1. Interacts with PDE4DIP; this interaction stabilizes both proteins. In complex with PDE4DIP, recruits CAMSAP2 to the Golgi apparatus. Forms a pericentrosomal complex with CDK5RAP2, EB1/MAPRE1 and PDE4DIP; within this complex, MAPRE1 binding to CDK5RAP2 may be mediated by PDE4DIP. The interaction with PDE4DIP is isoform-specific. Interacts with MAPRE1 and MAPRE3. Interacts (via C-terminus) with CAMSAP2; this interaction is much stronger in the presence of PDE4DIP. Interacts with CAMSAP3. Interacts (via C-terminus) with the gamma-tubulin ring complex (gamma-TuRC), composed of gamma-tubulin, TUBGCP2, TUBGCP3, TUBGCP4, TUBGCP5 and TUBGCP6. In terms of tissue distribution, highly expressed in gastric parietal cells.

It localises to the golgi apparatus. The protein resides in the cytoplasm. It is found in the cytoskeleton. The protein localises to the microtubule organizing center. Its subcellular location is the centrosome. In terms of biological role, scaffolding protein that assembles several protein kinases and phosphatases on the centrosome and Golgi apparatus. Required to maintain the integrity of the Golgi apparatus. Required for microtubule nucleation at the cis-side of the Golgi apparatus. Required for association of the centrosomes with the poles of the bipolar mitotic spindle during metaphase. In complex with PDE4DIP, recruits CAMSAP2 to the Golgi apparatus and tethers non-centrosomal minus-end microtubules to the Golgi, an important step for polarized cell movement. In complex with PDE4DIP, EB1/MAPRE1 and CDK5RAP2, contributes to microtubules nucleation and extension also from the centrosome to the cell periphery. The interaction with PDE4DIP is isoform-specific. This is A-kinase anchor protein 9 (AKAP9) from Oryctolagus cuniculus (Rabbit).